The following is a 358-amino-acid chain: DnaJ homolog subfamily B member 11 (358 aa).

An N-terminal signal peptide occupies residues 1–22 (MAPQNLGTLCLLLLYLLGAAIA). One can recognise a J domain in the interval 25 to 90 (DFYKILGVPR…EKRKQYDTYG (66 aa)). Position 188 is a phosphothreonine (Thr-188). An N-linked (GlcNAc...) asparagine glycan is attached at Asn-261.

In terms of assembly, part of a large chaperone multiprotein complex comprising DNAJB11, HSP90B1, HSPA5, HYOU, PDIA2, PDIA4, PDIA6, PPIB, SDF2L1, UGGT1 and very small amounts of ERP29, but not, or at very low levels, CALR nor CANX. Binds to denatured substrates in an ATP-independent manner. Interacts via the J domain with HSPA5 in an ATP-dependent manner. Contains high-mannose Endo H-sensitive carbohydrates. In terms of processing, cys-169, Cys-171, Cys-193 and Cys-196 form intramolecular disulfide bonds. The preferential partner for each Cys is not known. Pancreas.

The protein resides in the endoplasmic reticulum lumen. In terms of biological role, as a co-chaperone for HSPA5 it is required for proper folding, trafficking or degradation of proteins. Binds directly to both unfolded proteins that are substrates for ERAD and nascent unfolded peptide chains, but dissociates from the HSPA5-unfolded protein complex before folding is completed. May help recruiting HSPA5 and other chaperones to the substrate. Stimulates HSPA5 ATPase activity. It is necessary for maturation and correct trafficking of PKD1. This chain is DnaJ homolog subfamily B member 11 (DNAJB11), found in Canis lupus familiaris (Dog).